The following is a 198-amino-acid chain: Adenine phosphoribosyltransferase (198 aa).

Belongs to the purine/pyrimidine phosphoribosyltransferase family. In terms of assembly, homodimer.

It localises to the cytoplasm. The catalysed reaction is AMP + diphosphate = 5-phospho-alpha-D-ribose 1-diphosphate + adenine. It participates in purine metabolism; AMP biosynthesis via salvage pathway; AMP from adenine: step 1/1. Catalyzes a salvage reaction resulting in the formation of AMP, that is energically less costly than de novo synthesis. In Serratia proteamaculans (strain 568), this protein is Adenine phosphoribosyltransferase.